The chain runs to 261 residues: MRILITNDDGIASPGLRAAVRACRSVGEVTVVAPATQQSGVGRSISLLEPVRVEEIEVEGVDALAISGTPADAVLIGAFSIMDEPPDLVVSGINLGENVSADVTTSGTVGAALEAYGNGIPAIAISQEVRDARARVDNNAKNVDFTLAIRVLKALLEAIRGANWEGVLNVNVPDPDRWNGEIKVVPLAFTMYRPRIEKRYDPRGRRYYWIDGEIIQDPPEGTDLYELQRGSIVITPLTTDVTGDLDAAENVIKELRRALRG.

Residues Asp8, Asp9, Ser39, and Asn94 each contribute to the a divalent metal cation site.

The protein belongs to the SurE nucleotidase family. A divalent metal cation serves as cofactor.

The protein resides in the cytoplasm. The enzyme catalyses a ribonucleoside 5'-phosphate + H2O = a ribonucleoside + phosphate. Its function is as follows. Nucleotidase that shows phosphatase activity on nucleoside 5'-monophosphates. The chain is 5'-nucleotidase SurE from Methanopyrus kandleri (strain AV19 / DSM 6324 / JCM 9639 / NBRC 100938).